We begin with the raw amino-acid sequence, 406 residues long: Endoplasmic reticulum resident protein 44 (406 aa).

An N-terminal signal peptide occupies residues 1–29 (MIPGIFLSLPDLRCSLLLLVTWVFTPVTA). One can recognise a Thioredoxin domain in the interval 30 to 138 (EIISLDTENI…VKALADYIRQ (109 aa)). 2 disulfides stabilise this stretch: C189/C241 and C301/C318. Positions 236–285 (WIQDKCVPLVREITFENGEELTEEGLPFLILFHMKEDTESLEIFQNEVAR) are interaction with ITPR1. Residues 360–387 (FHHGPDPTDTAPGEEVQDVASSPPESSF) form a disordered region. Positions 378–387 (VASSPPESSF) are enriched in polar residues. The Prevents secretion from ER motif lies at 403–406 (RDEL).

In terms of assembly, forms mixed disulfides with both ERO1A and ERO1B and cargo folding intermediates; the interactions with ERO1A and ERO1B result in their retention in the endoplasmic reticulum. Directly interacts with ITPR1 in a pH-, redox state- and calcium-dependent manner, but not with ITPR2 or ITPR3. The strength of this interaction inversely correlates with calcium concentration.

Its subcellular location is the endoplasmic reticulum lumen. Functionally, mediates thiol-dependent retention in the early secretory pathway, forming mixed disulfides with substrate proteins through its conserved CRFS motif. Inhibits the calcium channel activity of ITPR1. May have a role in the control of oxidative protein folding in the endoplasmic reticulum. Required to retain ERO1A and ERO1B in the endoplasmic reticulum. This Bos taurus (Bovine) protein is Endoplasmic reticulum resident protein 44 (ERP44).